The primary structure comprises 192 residues: A-type ATP synthase subunit E (192 aa).

The protein belongs to the V-ATPase E subunit family. In terms of assembly, has multiple subunits with at least A(3), B(3), C, D, E, F, H, I and proteolipid K(x).

The protein localises to the cell membrane. Component of the A-type ATP synthase that produces ATP from ADP in the presence of a proton gradient across the membrane. The protein is A-type ATP synthase subunit E of Sulfolobus acidocaldarius (strain ATCC 33909 / DSM 639 / JCM 8929 / NBRC 15157 / NCIMB 11770).